A 292-amino-acid chain; its full sequence is uncharacterized protein (292 aa).

A disordered region spans residues 62-81; that stretch reads ESSSDSDMGFHESQQNQKSN.

This is an uncharacterized protein from Homo sapiens (Human).